The following is a 318-amino-acid chain: Tyrosine--tRNA ligase (318 aa).

L-tyrosine is bound at residue Tyr-35. The short motif at 40–48 is the 'HIGH' region element; it reads PSGKVHLGH. 4 residues coordinate L-tyrosine: Tyr-154, Gln-158, Asp-161, and Gln-176. The short motif at 211 to 215 is the 'KMSKS' region element; sequence KMSSS. Ser-214 serves as a coordination point for ATP.

It belongs to the class-I aminoacyl-tRNA synthetase family. TyrS type 3 subfamily. As to quaternary structure, homodimer.

The protein resides in the cytoplasm. The enzyme catalyses tRNA(Tyr) + L-tyrosine + ATP = L-tyrosyl-tRNA(Tyr) + AMP + diphosphate + H(+). Catalyzes the attachment of tyrosine to tRNA(Tyr) in a two-step reaction: tyrosine is first activated by ATP to form Tyr-AMP and then transferred to the acceptor end of tRNA(Tyr). In Methanosphaera stadtmanae (strain ATCC 43021 / DSM 3091 / JCM 11832 / MCB-3), this protein is Tyrosine--tRNA ligase.